Consider the following 1946-residue polypeptide: Chromodomain-helicase-DNA-binding protein 5 (1946 aa).

Disordered stretches follow at residues 1–140, 236–272, and 285–340; these read MRGP…SGQL, VPQTLPIRKAKTKEGKGPGVRKKNKGAKDSKKKGRGK, and SKRK…GDGY. Composition is skewed to acidic residues over residues 17-37 and 72-90; these read EEMENEEEMSEEEDGGLEGFE and NDEMSDNEEDLEEKSESEG. 2 stretches are compositionally biased toward basic residues: residues 96-118 and 254-272; these read TKKKKKKLKEKKEKKEKKEKRKK and GVRKKNKGAKDSKKKGRGK. Acidic residues predominate over residues 293–303; that stretch reads SEEDEREDSDL. Basic residues predominate over residues 323-332; that stretch reads KKNKRRRKKK. PHD-type zinc fingers lie at residues 345-392 and 418-465; these read QDYC…CEKE and MEFC…CTCP. Positions 345–655 are histone-binding; that stretch reads QDYCEVCQQG…HRELMLGEDA (311 aa). Positions 499–556 constitute a Chromo 1 domain; it reads MPPPRPLEGIPEREFFVKWAGLSYWHCSWVKELQLELYHTVMYRNYQRKNDMDEPPPF. Positions 551–573 are disordered; the sequence is DEPPPFDYGSGDEDGKSEKRKNK. A compositionally biased stretch (basic and acidic residues) spans 563-573; that stretch reads EDGKSEKRKNK. One can recognise a Chromo 2 domain in the interval 594–655; the sequence is MMVHRILNHS…HRELMLGEDA (62 aa). A Helicase ATP-binding domain is found at 714–898; the sequence is RFSWAQGTDT…FHLLNFLTPE (185 aa). 727-734 serves as a coordination point for ATP; sequence DEMGLGKT. The short motif at 849 to 852 is the DEAH box element; sequence DEAH. Residues 1030–1195 form the Helicase C-terminal domain; sequence LLQKMLKKLR…MTKQELDDIL (166 aa). 5 disordered regions span residues 1210 to 1254, 1353 to 1413, 1525 to 1566, 1579 to 1696, and 1926 to 1946; these read MMSQ…VEDS, YNDA…LPPL, KYST…APLG, DEKE…EDKN, and SFPAEPSHLPNPRGREKLQPF. Positions 1212–1230 are enriched in polar residues; sequence SQGQRPTTPIPDIQSTKGG. 2 stretches are compositionally biased toward acidic residues: residues 1357–1368 and 1378–1387; these read SQEDQEWQDELS and SEDEDEDFEE. Position 1392 is an N5-methylglutamine (Gln-1392). The span at 1551-1564 shows a compositional bias: pro residues; it reads TPVPASPAQLPPAP. Ser-1556 carries the phosphoserine modification. 3 stretches are compositionally biased toward basic and acidic residues: residues 1602–1629, 1637–1654, and 1661–1676; these read DRVEGEDKHQSSDSKDRAREERTEEVEK, PLKEEVLPDKEPIPDKPE, and GDFRPDDPKTEEKEPG.

The protein belongs to the SNF2/RAD54 helicase family. As to quaternary structure, component of the nucleosome remodeling and deacetylase (NuRD) repressor complex, composed of core proteins MTA1, MTA2, MTA3, RBBP4, RBBP7, HDAC1, HDAC2, MBD2, MBD3, and peripherally associated proteins CDK2AP1, CDK2AP2, GATAD2A, GATAD2B, CHD3, CHD4 and CHD5. The exact stoichiometry of the NuRD complex is unknown, and some subunits such as MBD2 and MBD3, GATAD2A and GATAD2B, and CHD3, CHD4 and CHD5 define mutually exclusive NuRD complexes. Interacts with HDAC2. Post-translationally, methylated at Gln-1392 by N6AMT1. In terms of tissue distribution, specifically expressed by neurons in brain, retina and adrenal gland (at protein level). Also detected in testis.

It is found in the nucleus. The protein localises to the chromosome. It carries out the reaction ATP + H2O = ADP + phosphate + H(+). In terms of biological role, ATP-dependent chromatin-remodeling factor that binds DNA through histones and regulates gene transcription. May specifically recognize and bind trimethylated 'Lys-27' (H3K27me3) and non-methylated 'Lys-4' of histone H3. Acts as a component of the histone deacetylase NuRD complex which participates in the remodeling of chromatin. Plays a role in the development of the nervous system by activating the expression of genes promoting neuron terminal differentiation. In parallel, it may also positively regulate the trimethylation of histone H3 at 'Lys-27' thereby specifically repressing genes that promote the differentiation into non-neuronal cell lineages. Regulates the expression of genes involved in cell proliferation and differentiation. Downstream activated genes may include CDKN2A that positively regulates the p53/TP53 pathway, which in turn, prevents cell proliferation. In spermatogenesis, it probably regulates histone hyperacetylation and the replacement of histones by transition proteins in chromatin, a crucial step in the condensation of spermatid chromatin and the production of functional spermatozoa. This chain is Chromodomain-helicase-DNA-binding protein 5 (Chd5), found in Mus musculus (Mouse).